A 614-amino-acid polypeptide reads, in one-letter code: DNA repair protein rad26 (614 aa).

Residues 29–43 (QAQTQVQAQSSQVVV) show a composition bias toward low complexity. Disordered stretches follow at residues 29–76 (QAQT…QASL) and 157–214 (KKMK…TAED). Composition is skewed to polar residues over residues 50-76 (QNLNLPNSYTNSSQKVRESTVNSQASL) and 181-190 (LLSSSDQLAK). Residues 191-207 (STKHAAKNSPSKKKRKT) are compositionally biased toward basic residues.

In terms of assembly, interacts with cds1.

It localises to the nucleus. In terms of biological role, involved in cell cycle arrest when DNA synthesis is inhibited by hydroxyurea, and in mitosis arrest after treatment with DNA-damaging agents. This protein is S phase-specific. The polypeptide is DNA repair protein rad26 (rad26) (Schizosaccharomyces pombe (strain 972 / ATCC 24843) (Fission yeast)).